The sequence spans 483 residues: Trimethylamine methyltransferase MttB (483 aa).

Residue pyrrolysine 334 is a non-standard amino acid, pyrrolysine.

Belongs to the trimethylamine methyltransferase family. As to quaternary structure, can form a complex with MttC.

It carries out the reaction Co(I)-[trimethylamine-specific corrinoid protein] + trimethylamine + H(+) = methyl-Co(III)-[trimethylamine-specific corrinoid protein] + dimethylamine. It participates in one-carbon metabolism; methanogenesis from trimethylamine. Catalyzes the transfer of a methyl group from trimethylamine to the corrinoid cofactor of MttC. The protein is Trimethylamine methyltransferase MttB (mttB) of Methanosarcina thermophila.